Here is a 544-residue protein sequence, read N- to C-terminus: MAAKEVKFGRSAREKMLKGVDILADAVKVTLGPKGRNVVIDKSFGAPRITKDGVSVAKEIELEDKFENMGAQLVREVASKTNDIAGDGTTTATVLAQAIVREGAKAVAAGMNPMDLKRGIDLAVAEVVKDLQAKAKKINTSEEVAQVGTISANGERQIGLDIAEAMQRVGNEGVITVEEAKTAETELEVVEGMQFDRGYLSPYFVTNPEKMVADLEDAYILLHEKKLSNLQAMLPVLEAVVQTGKPLVIIAEDVEGEALATLVVNKLRGGLKIAAVKAPGFGDRRKAMLEDIAILTGGTVISEDLGIKLESVTLDMLGKSKKVSISKENTTIVDGAGQKSDIEGRVAQIKAQIEETTSDYDREKLQERLAKLAGGVAVIRVGGSTEVEVKEKKDRIDDALNATRAAVQEGIVPGGGVALLRSSTKITVKGVNDDQEAGINIVRKALQSLVRQIAENAGDEASIVVGKILDKNEDNYGYNAQTGEYGDLIALGIVDPVKVVRTALQNAASVASLLITTEAMIAELPKKESAMPQMPGGGMGGMDF.

Residues 30-33 (TLGP), K51, 87-91 (DGTTT), G415, and D495 each bind ATP.

This sequence belongs to the chaperonin (HSP60) family. In terms of assembly, forms a cylinder of 14 subunits composed of two heptameric rings stacked back-to-back. Interacts with the co-chaperonin GroES.

The protein localises to the cytoplasm. It catalyses the reaction ATP + H2O + a folded polypeptide = ADP + phosphate + an unfolded polypeptide.. Together with its co-chaperonin GroES, plays an essential role in assisting protein folding. The GroEL-GroES system forms a nano-cage that allows encapsulation of the non-native substrate proteins and provides a physical environment optimized to promote and accelerate protein folding. In Agrobacterium fabrum (strain C58 / ATCC 33970) (Agrobacterium tumefaciens (strain C58)), this protein is Chaperonin GroEL.